Reading from the N-terminus, the 506-residue chain is Methylthioalkylmalate synthase 2, chloroplastic (506 aa).

The N-terminal 49 residues, 1-49 (MASSLLTSSGMIPTTGSTVVGRSVLPFQSSLHSLRLTHSYKNPALFISC), are a transit peptide targeting the chloroplast. Residues 85–359 (VRVFDTTLRD…YTRIDTRQIM (275 aa)) form the Pyruvate carboxyltransferase domain.

This sequence belongs to the alpha-IPM synthase/homocitrate synthase family.

It is found in the plastid. The protein resides in the chloroplast. The catalysed reaction is an omega-(methylsulfanyl)-2-oxoalkanoate + acetyl-CoA + H2O = a 2-(omega-methylsulfanyl)alkylmalate + CoA + H(+). Functionally, catalyzes only the first methionine chain elongation cycle. The polypeptide is Methylthioalkylmalate synthase 2, chloroplastic (MAM2) (Arabidopsis thaliana (Mouse-ear cress)).